The following is an 81-amino-acid chain: Cytotoxin 5 (81 aa).

The signal sequence occupies residues 1-21; sequence MKTLLLTLVVVTIVCLDLGYT. Cystine bridges form between Cys-24-Cys-42, Cys-35-Cys-59, Cys-63-Cys-74, and Cys-75-Cys-80.

It belongs to the three-finger toxin family. Short-chain subfamily. Type IA cytotoxin sub-subfamily. Monomer in solution; Homodimer and oligomer in the presence of negatively charged lipids forming a pore with a size ranging between 20 and 30 Angstroms. Expressed by the venom gland.

The protein resides in the secreted. The protein localises to the target cell membrane. Its function is as follows. Shows cytolytic activity on many different cells by forming pore in lipid membranes. In vivo, increases heart rate or kills the animal by cardiac arrest. In addition, it binds to heparin with high affinity, interacts with Kv channel-interacting protein 1 (KCNIP1) in a calcium-independent manner, and binds to integrin alpha-V/beta-3 (ITGAV/ITGB3) with moderate affinity. This Naja atra (Chinese cobra) protein is Cytotoxin 5.